The primary structure comprises 35 residues: Conotoxin Cl6.16 (35 aa).

Disulfide bonds link Cys-10–Cys-22, Cys-16–Cys-27, and Cys-21–Cys-34.

As to expression, expressed by the venom duct.

Its subcellular location is the secreted. The sequence is that of Conotoxin Cl6.16 from Californiconus californicus (California cone).